The primary structure comprises 518 residues: Na(+)/H(+) exchange regulatory cofactor NHE-RF3 (518 aa).

The 82-residue stretch at 9-90 (ECKLSKEEGQ…AVTLLVLDGN (82 aa)) folds into the PDZ 1 domain. 6 positions are modified to phosphoserine: Ser108, Ser148, Ser192, Ser250, Ser334, and Ser348. 2 consecutive PDZ domains span residues 135–215 (LCYL…VDKE) and 243–323 (IVEM…VDKE). In terms of domain architecture, PDZ 4 spans 378–458 (LCRLDKGENG…NVTLLVCGKK (81 aa)). A Phosphothreonine modification is found at Thr451. Residues 499 to 518 (KERAHSTASNSSSNSEDTEL) are disordered. Residues Ser507, Ser509, Ser510, Ser511, and Ser513 each carry the phosphoserine modification. The span at 507–518 (SNSSSNSEDTEL) shows a compositional bias: low complexity.

It belongs to the NHER family. In terms of assembly, interacts with PDZK1IP1 and ABCC2. Interacts (via PDZ domains 1 and 3) with SCARB1 (C-terminal domain). Forms a heterodimeric complex with NHERF1. Interacts with AKAP2, BCR, CFTR, SLCO1A1, SLC22A12, SLC22A4, SLC22A5, NHERF2 and SLC17A1. Component of a complex, composed of PDZK1, SYNGAP1, KLHL17 and NMDA receptors. Interacts (via PDZ1 domain) directly with KLHL17; the interaction is important for integrity of actin cytoskeleton structures in neurons. Interacts (via C-terminal PDZ domain) with SLC9A3 (via C-terminal domain). Interacts (via the first PDZ domain) with PTGIR (via non-isoprenylated C-terminus). Binds to the C-terminal region of SLC26A3. Interacts (via C-terminal PDZ domain) with SLC26A6 (via C-terminal domain). Interacts (via PDZ domains 1 and 3) with SLC5A8 (via PDZ-binding motif); interaction increases nicotinate transport activity of SLC5A8. As to expression, highly expressed in the brush border membrane of duodenal and ileal mucosa.

The protein localises to the membrane. The protein resides in the cell membrane. In terms of biological role, a scaffold protein that connects plasma membrane proteins and regulatory components, regulating their surface expression in epithelial cells apical domains. May be involved in the coordination of a diverse range of regulatory processes for ion transport and second messenger cascades. In complex with NHERF1, may cluster proteins that are functionally dependent in a mutual fashion and modulate the trafficking and the activity of the associated membrane proteins. May play a role in the cellular mechanisms associated with multidrug resistance through its interaction with ABCC2 and PDZK1IP1. May potentiate the CFTR chloride channel activity. Required for normal cell-surface expression of SCARB1. Plays a role in maintaining normal plasma cholesterol levels via its effects on SCARB1. Plays a role in the normal localization and function of the chloride-anion exchanger SLC26A6 to the plasma membrane in the brush border of the proximal tubule of the kidney. May be involved in the regulation of proximal tubular Na(+)-dependent inorganic phosphate cotransport therefore playing an important role in tubule function. The chain is Na(+)/H(+) exchange regulatory cofactor NHE-RF3 (PDZK1) from Oryctolagus cuniculus (Rabbit).